The sequence spans 855 residues: Beta-mannosidase B (855 aa).

Asn98 carries an N-linked (GlcNAc...) asparagine glycan. Glu430 acts as the Proton donor in catalysis. Asn693 and Asn730 each carry an N-linked (GlcNAc...) asparagine glycan.

Belongs to the glycosyl hydrolase 2 family. Beta-mannosidase B subfamily. As to quaternary structure, homodimer.

The protein localises to the secreted. It carries out the reaction Hydrolysis of terminal, non-reducing beta-D-mannose residues in beta-D-mannosides.. It participates in glycan metabolism; N-glycan degradation. Functionally, exoglycosidase that cleaves the single beta-linked mannose residue from the non-reducing end of beta-mannosidic oligosaccharides of various complexity and length. Prefers mannobiose over mannotriose. Is also severely restricted by galactosyl substitutions at the +1 subsite. Has no activity against polymeric mannan. The chain is Beta-mannosidase B (man9) from Thermothelomyces thermophilus (Myceliophthora thermophila).